Here is a 536-residue protein sequence, read N- to C-terminus: MDKVGKMWNNFKYRCQNLFGHEGGSRSENVDMNSNRCLSVKEKNISIGDSTPQQQSSPLRENIALQLGLSPSKNSSRRNQNCATEIPQIVEISIEKDNDSCVTPGTRLARRDSYSRHAPWGGKKKHSCSTKTQSSLDADKKFGRTRSGLQRRERRYGVSSVHDMDSVSSRTVGSRSLRQRLQDTVGLCFPMRTYSKQSKPLFSNKRKIHLSELMLEKCPFPAGSDLAQKWHLIKQHTAPVSPHSTFFDTFDPSLVSTEDEEDRLRERRRLSIEEGVDPPPNAQIHTFEATAQVNPLYKLGPKLAPGMTEISGDSSAIPQANCDSEEDTTTLCLQSRRQKQRQISGDSHTHVSRQGAWKVHTQIDYIHCLVPDLLQITGNPCYWGVMDRYEAEALLEGKPEGTFLLRDSAQEDYLFSVSFRRYNRSLHARIEQWNHNFSFDAHDPCVFHSSTVTGLLEHYKDPSSCMFFEPLLTISLNRTFPFSLQYICRAVICRCTTYDGIDGLPLPSMLQDFLKEYHYKQKVRVRWLEREPVKAK.

A required for interaction with IL4R region spans residues 1-50; that stretch reads MDKVGKMWNNFKYRCQNLFGHEGGSRSENVDMNSNRCLSVKEKNISIGDS. Positions 115-175 are disordered; it reads SRHAPWGGKK…SVSSRTVGSR (61 aa). Over residues 158–169 the composition is skewed to low complexity; the sequence is VSSVHDMDSVSS. Residues 381–476 form the SH2 domain; that stretch reads CYWGVMDRYE…FFEPLLTISL (96 aa). One can recognise an SOCS box domain in the interval 471–520; sequence LLTISLNRTFPFSLQYICRAVICRCTTYDGIDGLPLPSMLQDFLKEYHYK.

As to quaternary structure, interacts with IL4R; inhibits IL4 signaling. Interacts with EGFR. Interacts with ELOB and ELOC; mediates EGFR ubiquitination and degradation. In terms of processing, phosphorylated. Phosphorylation is induced by EGF.

The protein operates within protein modification; protein ubiquitination. Functionally, SOCS family proteins form part of a classical negative feedback system that regulates cytokine signal transduction. May be a substrate-recognition component of a SCF-like ECS (Elongin BC-CUL2/5-SOCS-box protein) E3 ubiquitin-protein ligase complex which mediates the ubiquitination and subsequent proteasomal degradation of target proteins. Inhibits for instance EGF signaling by mediating the degradation of the EGF receptor/EGFR. Involved in the regulation of T-helper cell differentiation by inhibiting of the IL4 signaling pathway which promotes differentiation into the Th2 phenotype. Can also partially inhibit IL6 and LIF signaling. The protein is Suppressor of cytokine signaling 5 (SOCS5) of Homo sapiens (Human).